Here is a 191-residue protein sequence, read N- to C-terminus: UPF0312 protein PA0423 (191 aa).

An N-terminal signal peptide occupies residues methionine 1–alanine 23.

It belongs to the UPF0312 family. Type 1 subfamily.

The protein localises to the periplasm. This chain is UPF0312 protein PA0423, found in Pseudomonas aeruginosa (strain ATCC 15692 / DSM 22644 / CIP 104116 / JCM 14847 / LMG 12228 / 1C / PRS 101 / PAO1).